The chain runs to 350 residues: Ferredoxin--NADP reductase (350 aa).

Threonine 14, aspartate 33, glutamine 41, tyrosine 46, alanine 86, phenylalanine 121, aspartate 286, and threonine 327 together coordinate FAD.

The protein belongs to the ferredoxin--NADP reductase type 2 family. As to quaternary structure, homodimer. It depends on FAD as a cofactor.

It catalyses the reaction 2 reduced [2Fe-2S]-[ferredoxin] + NADP(+) + H(+) = 2 oxidized [2Fe-2S]-[ferredoxin] + NADPH. The chain is Ferredoxin--NADP reductase from Flavobacterium johnsoniae (strain ATCC 17061 / DSM 2064 / JCM 8514 / BCRC 14874 / CCUG 350202 / NBRC 14942 / NCIMB 11054 / UW101) (Cytophaga johnsonae).